Consider the following 1883-residue polypeptide: Endoribonuclease Dicer homolog 1 (1883 aa).

3 disordered regions span residues 71–97, 129–188, and 221–262; these read AESS…PELP, ARKE…DDRR, and RSGT…EKPV. Over residues 75–96 the composition is skewed to pro residues; that stretch reads PAPPPPPPPPLPEPVPVAPPEL. Basic and acidic residues-rich tracts occupy residues 129–138 and 228–262; these read ARKEPRRESH and ESDR…EKPV. In terms of domain architecture, Helicase ATP-binding spans 274 to 413; sequence VLEQAKSRNT…QEDCAIKIRN (140 aa). 287–294 lines the ATP pocket; that stretch reads LETGAGKT. The short motif at 358–361 is the DECH box element; that stretch reads DECH. The segment at 577 to 604 is disordered; that stretch reads KSETSDVEMQNTEKHNTNDLEEGELPDS. The region spanning 629-789 is the Helicase C-terminal domain; the sequence is LIKILLKYQH…RTDLSHLDGT (161 aa). A Dicer dsRNA-binding fold domain is found at 817–912; sequence AVGLIHFYCS…LPDRGSGEGE (96 aa). The segment at 901–928 is disordered; sequence TLLPDRGSGEGEKTEQNDEGEPLPGTAR. Positions 907–916 are enriched in basic and acidic residues; sequence GSGEGEKTEQ. The PAZ domain maps to 1163 to 1296; that stretch reads HFSDYQNQGK…LPPELCLVHP (134 aa). 2 RNase III domains span residues 1320 to 1498 and 1538 to 1686; these read LAVQ…VAGG and FDTL…LDSG. 3 residues coordinate Mg(2+): Glu-1576, Asp-1672, and Glu-1675. DRBM domains lie at 1712-1775 and 1797-1872; these read HPVR…VLKE and FTRQ…LLNR.

Belongs to the helicase family. Dicer subfamily. In terms of assembly, may interact with ARGONAUTE1 or PINHEAD through their common PAZ domains. The cofactor is Mg(2+). It depends on Mn(2+) as a cofactor.

The protein localises to the nucleus. Its function is as follows. Involved in the RNA silencing pathway. Cleaves double-stranded RNA to produce microRNAs (miRNAs) of 21-24 nucleotides which target the selective destruction of complementary RNAs. Regulates by this way the development of the plant. May not be involved in small interfering RNAs (siRNAs) production. This chain is Endoribonuclease Dicer homolog 1 (DCL1), found in Oryza sativa subsp. japonica (Rice).